The sequence spans 180 residues: Nucleoside-triphosphatase THEP1 (180 aa).

Residues 8-15 (GPVGSIKA) and 100-107 (VIIIDELG) each bind ATP.

Belongs to the THEP1 NTPase family.

It catalyses the reaction a ribonucleoside 5'-triphosphate + H2O = a ribonucleoside 5'-diphosphate + phosphate + H(+). Has nucleotide phosphatase activity towards ATP, GTP, CTP, TTP and UTP. May hydrolyze nucleoside diphosphates with lower efficiency. The sequence is that of Nucleoside-triphosphatase THEP1 from Picrophilus torridus (strain ATCC 700027 / DSM 9790 / JCM 10055 / NBRC 100828 / KAW 2/3).